The sequence spans 254 residues: NH(3)-dependent NAD(+) synthetase (254 aa).

29-36 contacts ATP; that stretch reads GLSGGIDS. Aspartate 35 is a binding site for Mg(2+). Residue arginine 115 participates in deamido-NAD(+) binding. Residue threonine 135 participates in ATP binding. Residue glutamate 140 coordinates Mg(2+). The deamido-NAD(+) site is built by lysine 148 and aspartate 155. 2 residues coordinate ATP: lysine 164 and serine 186. 245–246 is a binding site for deamido-NAD(+); sequence HK.

The protein belongs to the NAD synthetase family. As to quaternary structure, homodimer.

It carries out the reaction deamido-NAD(+) + NH4(+) + ATP = AMP + diphosphate + NAD(+) + H(+). The protein operates within cofactor biosynthesis; NAD(+) biosynthesis; NAD(+) from deamido-NAD(+) (ammonia route): step 1/1. Its function is as follows. Catalyzes the ATP-dependent amidation of deamido-NAD to form NAD. Uses ammonia as a nitrogen source. The polypeptide is NH(3)-dependent NAD(+) synthetase (Methanococcus aeolicus (strain ATCC BAA-1280 / DSM 17508 / OCM 812 / Nankai-3)).